Reading from the N-terminus, the 164-residue chain is Large ribosomal subunit protein bL17 (164 aa).

The segment at 127–164 is disordered; sequence RARTDSVPARKGAGKKDASRVSGTVPDGQSQKIGKKKE.

This sequence belongs to the bacterial ribosomal protein bL17 family. Part of the 50S ribosomal subunit. Contacts protein L32.

This chain is Large ribosomal subunit protein bL17, found in Treponema pallidum (strain Nichols).